Here is a 236-residue protein sequence, read N- to C-terminus: Sugar fermentation stimulation protein homolog (236 aa).

Belongs to the SfsA family.

The polypeptide is Sugar fermentation stimulation protein homolog (Paramagnetospirillum magneticum (strain ATCC 700264 / AMB-1) (Magnetospirillum magneticum)).